The sequence spans 117 residues: DNA-directed RNA polymerase subunit omega (117 aa).

The segment covering 96–105 (KEEAEEEAKQ) has biased composition (basic and acidic residues). The interval 96–117 (KEEAEEEAKQKNSRAAKAAAAE) is disordered. Over residues 108–117 (SRAAKAAAAE) the composition is skewed to low complexity.

Belongs to the RNA polymerase subunit omega family. In terms of assembly, the RNAP catalytic core consists of 2 alpha, 1 beta, 1 beta' and 1 omega subunit. When a sigma factor is associated with the core the holoenzyme is formed, which can initiate transcription.

It catalyses the reaction RNA(n) + a ribonucleoside 5'-triphosphate = RNA(n+1) + diphosphate. In terms of biological role, promotes RNA polymerase assembly. Latches the N- and C-terminal regions of the beta' subunit thereby facilitating its interaction with the beta and alpha subunits. The sequence is that of DNA-directed RNA polymerase subunit omega from Lactococcus lactis subsp. cremoris (strain MG1363).